The following is an 82-amino-acid chain: MQNEEGQVTELYIPRKCSATNRLITSKDHASVQLNIGHLDANGLYTGQFTTFALCGFVRAQGDADSGVDRLWQKKKVEAKQN.

Position 1 is an N-acetylmethionine (M1).

It belongs to the eukaryotic ribosomal protein eS21 family.

The protein is Small ribosomal subunit protein eS21y (RPS21C) of Arabidopsis thaliana (Mouse-ear cress).